Consider the following 279-residue polypeptide: Rhamnulose-1-phosphate aldolase (279 aa).

The active site involves Glu115. His138, His140, and His209 together coordinate Zn(2+).

The protein belongs to the aldolase class II family. RhaD subfamily. Zn(2+) serves as cofactor.

The protein localises to the cytoplasm. It carries out the reaction L-rhamnulose 1-phosphate = (S)-lactaldehyde + dihydroxyacetone phosphate. The protein operates within carbohydrate degradation; L-rhamnose degradation; glycerone phosphate from L-rhamnose: step 3/3. Functionally, catalyzes the reversible cleavage of L-rhamnulose-1-phosphate to dihydroxyacetone phosphate (DHAP) and L-lactaldehyde. The chain is Rhamnulose-1-phosphate aldolase from Enterococcus faecalis (strain ATCC 700802 / V583).